A 325-amino-acid chain; its full sequence is uncharacterized protein (325 aa).

The disordered stretch occupies residues 1-32 (MKQEYIPLDEFPNKSNEGMLNDEGTSSSGLST). Positions 23-32 (EGTSSSGLST) are enriched in low complexity. Residues 135–223 (AEEISNLKTS…LKKREDLLRL (89 aa)) are a coiled coil.

The protein resides in the cytoplasm. The protein localises to the cytoskeleton. Its subcellular location is the microtubule organizing center. It localises to the spindle pole body. This is an uncharacterized protein from Schizosaccharomyces pombe (strain 972 / ATCC 24843) (Fission yeast).